The sequence spans 262 residues: Putative ankyrin repeat protein R848 (262 aa).

ANK repeat units lie at residues 8–37 (SNDYALSLASKNGHIKVVKYLVSKDANVTH), 38–67 (DNNYAVRYASENGHFEVVKYLVDQGADIRD), 68–97 (CRDYAVRFASENGHLEVVKYLVDKGANIRA), 99–127 (DDYAVCLASVNGYIEIVKYLVSQGANFRA), 128–157 (DNDYAVRFASENGYLEVVKFLVDQGADIRA), 159–187 (DDYAIISASVYGHLEVIKFLMSQGADFRS), and 189–217 (NNASIKLAIKYKHPEIIEYFLTQCTDVNT).

This Acanthamoeba polyphaga (Amoeba) protein is Putative ankyrin repeat protein R848.